A 111-amino-acid chain; its full sequence is WAP four-disulfide core domain protein 12 (111 aa).

Positions 1–23 (MGSSSFLVLTVSLALVTLVAAEG) are cleaved as a signal peptide. Residues 27–74 (GIEKAGVCPADNVRCFKSDPPQCHTDQDCLGARKCCYLHCGFKCVIPV) form the WAP domain. 4 disulfide bridges follow: cysteine 34-cysteine 62, cysteine 41-cysteine 66, cysteine 49-cysteine 61, and cysteine 55-cysteine 70. A disordered region spans residues 80–111 (GGNKDEDVSGPCPEPGWEAKSPGSSSTGCPQK). Polar residues predominate over residues 101–111 (PGSSSTGCPQK).

Its subcellular location is the secreted. Functionally, antibacterial protein. Putative acid-stable proteinase inhibitor. This is WAP four-disulfide core domain protein 12 (WFDC12) from Papio anubis (Olive baboon).